Here is a 205-residue protein sequence, read N- to C-terminus: Peptidyl-tRNA hydrolase (205 aa).

Position 17 (Y17) interacts with tRNA. H22 functions as the Proton acceptor in the catalytic mechanism. Y73 and N75 together coordinate tRNA.

This sequence belongs to the PTH family. Monomer.

The protein localises to the cytoplasm. The enzyme catalyses an N-acyl-L-alpha-aminoacyl-tRNA + H2O = an N-acyl-L-amino acid + a tRNA + H(+). Functionally, hydrolyzes ribosome-free peptidyl-tRNAs (with 1 or more amino acids incorporated), which drop off the ribosome during protein synthesis, or as a result of ribosome stalling. In terms of biological role, catalyzes the release of premature peptidyl moieties from peptidyl-tRNA molecules trapped in stalled 50S ribosomal subunits, and thus maintains levels of free tRNAs and 50S ribosomes. This is Peptidyl-tRNA hydrolase from Maridesulfovibrio salexigens (strain ATCC 14822 / DSM 2638 / NCIMB 8403 / VKM B-1763) (Desulfovibrio salexigens).